The sequence spans 283 residues: Pyridoxine/pyridoxal/pyridoxamine kinase (283 aa).

The substrate site is built by Ser-23 and His-59. Asp-125 contributes to the ATP binding site. Residue Tyr-136 participates in Mg(2+) binding. ATP-binding positions include Thr-157, Glu-162, Thr-195, 222 to 225 (HAHV), and Thr-232. Mg(2+) is bound at residue Glu-162. Asp-234 serves as a coordination point for substrate.

The protein belongs to the pyridoxine kinase family. PdxK subfamily. As to quaternary structure, homodimer. The cofactor is Mg(2+).

The catalysed reaction is pyridoxal + ATP = pyridoxal 5'-phosphate + ADP + H(+). The enzyme catalyses pyridoxine + ATP = pyridoxine 5'-phosphate + ADP + H(+). It catalyses the reaction pyridoxamine + ATP = pyridoxamine 5'-phosphate + ADP + H(+). It functions in the pathway cofactor metabolism; pyridoxal 5'-phosphate salvage; pyridoxal 5'-phosphate from pyridoxal: step 1/1. It participates in cofactor metabolism; pyridoxal 5'-phosphate salvage; pyridoxine 5'-phosphate from pyridoxine: step 1/1. The protein operates within cofactor metabolism; pyridoxal 5'-phosphate salvage; pyridoxamine 5'-phosphate from pyridoxamine: step 1/1. B6-vitamer kinase involved in the salvage pathway of pyridoxal 5'-phosphate (PLP). Catalyzes the phosphorylation of pyridoxine (PN), pyridoxal (PL), and pyridoxamine (PM), forming their respective 5'-phosphorylated esters, i.e. PNP, PLP and PMP. The protein is Pyridoxine/pyridoxal/pyridoxamine kinase of Bordetella pertussis (strain Tohama I / ATCC BAA-589 / NCTC 13251).